Consider the following 366-residue polypeptide: METQLYIGIMSGTSMDGADAVLIRMDGGKWLGAEGHAFTPYPDRLRRKLLDLQDTGTDELHRSRMLSQELSRLYAQTVGELLNKQNLAPSDITALGCHGQTVRHAPEHGYSVQLADLPLLAELTQIFTVGDFRSRDLAAGGQGAPLVPAFHEALFRDDRETRAVLNIGGIANISVLPPDAPAFGFDTGPGNMLMDAWMQAHWQLPYDKNGAKAAQGNILPQLLDRLLAHPYFAQPHPKSTGRELFALNWLETYLDGGENRYDVLRTLSRFTAQTVFDAVSHAAADARQMYICGGGIRNPVLMADLAECFGTRVSLHSTAELNLDPQWVEAAAFAWMAACWVNRIPGSPHKATGASKPCILGAGYYY.

12–19 contacts ATP; sequence GTSMDGAD.

This sequence belongs to the anhydro-N-acetylmuramic acid kinase family.

It catalyses the reaction 1,6-anhydro-N-acetyl-beta-muramate + ATP + H2O = N-acetyl-D-muramate 6-phosphate + ADP + H(+). It participates in amino-sugar metabolism; 1,6-anhydro-N-acetylmuramate degradation. Its pathway is cell wall biogenesis; peptidoglycan recycling. In terms of biological role, catalyzes the specific phosphorylation of 1,6-anhydro-N-acetylmuramic acid (anhMurNAc) with the simultaneous cleavage of the 1,6-anhydro ring, generating MurNAc-6-P. Is required for the utilization of anhMurNAc either imported from the medium or derived from its own cell wall murein, and thus plays a role in cell wall recycling. This chain is Anhydro-N-acetylmuramic acid kinase, found in Neisseria meningitidis serogroup C (strain 053442).